The chain runs to 390 residues: GTP 3',8-cyclase, mitochondrial (390 aa).

Residues 1–45 (MRRCFSKITDCHLGFKNSNFLLVGSEVGSGSVTRTITTTTSERLF) constitute a mitochondrion transit peptide. The Radical SAM core domain occupies 69–290 (KFGRLHTYLR…PSIKRMQDHP (222 aa)). Position 78 (Arg-78) interacts with GTP. Positions 85 and 89 each coordinate [4Fe-4S] cluster. Tyr-91 serves as a coordination point for S-adenosyl-L-methionine. [4Fe-4S] cluster is bound at residue Cys-92. Arg-128 lines the GTP pocket. Gly-132 contacts S-adenosyl-L-methionine. Thr-159 contributes to the GTP binding site. Position 183 (Ser-183) interacts with S-adenosyl-L-methionine. Lys-220 contributes to the GTP binding site. Met-254 is a binding site for S-adenosyl-L-methionine. [4Fe-4S] cluster-binding residues include Cys-317 and Cys-320. 322-324 (RLR) contacts GTP. Position 334 (Cys-334) interacts with [4Fe-4S] cluster.

It belongs to the radical SAM superfamily. MoaA family. Homodimer. [4Fe-4S] cluster is required as a cofactor. As to expression, expressed in all organs, with an abundant expression in the roots.

Its subcellular location is the mitochondrion matrix. The enzyme catalyses GTP + AH2 + S-adenosyl-L-methionine = (8S)-3',8-cyclo-7,8-dihydroguanosine 5'-triphosphate + 5'-deoxyadenosine + L-methionine + A + H(+). It functions in the pathway cofactor biosynthesis; molybdopterin biosynthesis. In terms of biological role, catalyzes the cyclization of GTP to (8S)-3',8-cyclo-7,8-dihydroguanosine 5'-triphosphate. The polypeptide is GTP 3',8-cyclase, mitochondrial (CNX2) (Arabidopsis thaliana (Mouse-ear cress)).